Here is a 187-residue protein sequence, read N- to C-terminus: Capsid protein (187 aa).

The tract at residues 150–187 (RRGGARASRSPRRRTPSPRRRRSQSPRRRRSQSPSANC) is disordered. Positions 158 to 180 (RSPRRRTPSPRRRRSQSPRRRRS) are enriched in basic residues. 3 positions are modified to phosphoserine; by host: Ser159, Ser166, and Ser174. Residues 159–165 (SPRRRTP) form a 1; half-length repeat. The tract at residues 159-181 (SPRRRTPSPRRRRSQSPRRRRSQ) is 3 X 8 AA repeats of S-P-R-R-R-[PR]-S-Q. The short motif at 162-179 (RRTPSPRRRRSQSPRRRR) is the Bipartite nuclear localization signal element. A run of 2 repeats spans residues 166–173 (SPRRRRSQ) and 174–181 (SPRRRRSQ). The segment at 181-187 (QSPSANC) is RNA binding.

Belongs to the orthohepadnavirus core antigen family. In terms of assembly, homodimerizes, then multimerizes. Interacts with cytosol exposed regions of viral L glycoprotein present in the reticulum-to-Golgi compartment. Interacts with human FLNB. Phosphorylated form interacts with host importin alpha; this interaction depends on the exposure of the NLS, which itself depends upon genome maturation and/or phosphorylation of the capsid protein. Interacts with host NUP153. In terms of processing, phosphorylated by host SRPK1, SRPK2, and maybe protein kinase C or GAPDH. Phosphorylation is critical for pregenomic RNA packaging. Protein kinase C phosphorylation is stimulated by HBx protein and may play a role in transport of the viral genome to the nucleus at the late step during the viral replication cycle.

The protein localises to the virion. It localises to the host cytoplasm. Functionally, self assembles to form an icosahedral capsid. Most capsids appear to be large particles with an icosahedral symmetry of T=4 and consist of 240 copies of capsid protein, though a fraction forms smaller T=3 particles consisting of 180 capsid proteins. Entering capsids are transported along microtubules to the nucleus. Phosphorylation of the capsid is thought to induce exposure of nuclear localization signal in the C-terminal portion of the capsid protein that allows binding to the nuclear pore complex via the importin (karyopherin-) alpha and beta. Capsids are imported in intact form through the nuclear pore into the nuclear basket, where it probably binds NUP153. Only capsids that contain the mature viral genome can release the viral DNA and capsid protein into the nucleoplasm. Immature capsids get stuck in the basket. Capsids encapsulate the pre-genomic RNA and the P protein. Pre-genomic RNA is reverse-transcribed into DNA while the capsid is still in the cytoplasm. The capsid can then either be directed to the nucleus, providing more genomes for transcription, or bud through the endoplasmic reticulum to provide new virions. The sequence is that of Capsid protein from Marmota monax (Woodchuck).